We begin with the raw amino-acid sequence, 371 residues long: Phospho-N-acetylmuramoyl-pentapeptide-transferase (371 aa).

Helical transmembrane passes span 21–41 (NHIL…DFYY), 46–66 (LTIP…IGIP), 92–112 (PTMG…ILYF), 119–139 (IILT…IDDF), 156–176 (ILLQ…NNLI), 182–202 (IANK…FVLL), 216–236 (GLLS…ILIE), 241–261 (NSTL…FLFL), 268–288 (LFMG…IALI), 296–316 (LIMG…VSIF), and 349–369 (IVSS…IFLI).

This sequence belongs to the glycosyltransferase 4 family. MraY subfamily. The cofactor is Mg(2+).

The protein resides in the cell inner membrane. The catalysed reaction is UDP-N-acetyl-alpha-D-muramoyl-L-alanyl-gamma-D-glutamyl-meso-2,6-diaminopimeloyl-D-alanyl-D-alanine + di-trans,octa-cis-undecaprenyl phosphate = di-trans,octa-cis-undecaprenyl diphospho-N-acetyl-alpha-D-muramoyl-L-alanyl-D-glutamyl-meso-2,6-diaminopimeloyl-D-alanyl-D-alanine + UMP. The protein operates within cell wall biogenesis; peptidoglycan biosynthesis. In terms of biological role, catalyzes the initial step of the lipid cycle reactions in the biosynthesis of the cell wall peptidoglycan: transfers peptidoglycan precursor phospho-MurNAc-pentapeptide from UDP-MurNAc-pentapeptide onto the lipid carrier undecaprenyl phosphate, yielding undecaprenyl-pyrophosphoryl-MurNAc-pentapeptide, known as lipid I. The protein is Phospho-N-acetylmuramoyl-pentapeptide-transferase of Prochlorococcus marinus (strain NATL2A).